The primary structure comprises 92 residues: Small ribosomal subunit protein uS19 (92 aa).

The protein belongs to the universal ribosomal protein uS19 family.

In terms of biological role, protein S19 forms a complex with S13 that binds strongly to the 16S ribosomal RNA. In Methylorubrum extorquens (strain CM4 / NCIMB 13688) (Methylobacterium extorquens), this protein is Small ribosomal subunit protein uS19.